Here is a 273-residue protein sequence, read N- to C-terminus: Putative inactive beta-glucuronidase protein GUSBP11 (273 aa).

The segment at 1–20 (MTAAETGRGKPRLGGGSGLG) is disordered.

Belongs to the glycosyl hydrolase 2 family.

The chain is Putative inactive beta-glucuronidase protein GUSBP11 (GUSBP11) from Homo sapiens (Human).